The primary structure comprises 604 residues: Acetylcholinesterase 4 (604 aa).

A signal peptide spans 1–23 (MKPKLVFLPFLIFITVFIEESEA). C88 and C115 are disulfide-bonded. 2 N-linked (GlcNAc...) asparagine glycosylation sites follow: N96 and N128. The active-site Acyl-ester intermediate is S219. A disulfide bridge connects residues C273 and C284. N274 and N299 each carry an N-linked (GlcNAc...) asparagine glycan. The active-site Charge relay system is the E347. Residues N400 and N446 are each glycosylated (N-linked (GlcNAc...) asparagine). C426 and C561 are disulfide-bonded. H477 functions as the Charge relay system in the catalytic mechanism.

Belongs to the type-B carboxylesterase/lipase family.

It localises to the synapse. Its subcellular location is the secreted. The protein localises to the cell membrane. It catalyses the reaction acetylcholine + H2O = choline + acetate + H(+). In terms of biological role, rapidly hydrolyzes choline released into the synapse. This is Acetylcholinesterase 4 (ace-4) from Caenorhabditis briggsae.